A 900-amino-acid polypeptide reads, in one-letter code: uncharacterized protein (900 aa).

The span at 1 to 16 (MGSNKEAKNIDSKNDR) shows a compositional bias: basic and acidic residues. Disordered stretches follow at residues 1-84 (MGSN…KLSS), 103-160 (NSSR…PDPS), 512-556 (NFNQ…KKSG), 568-613 (LAST…KSAN), and 648-676 (KRSS…NSFP). Over residues 17–27 (GLTSITSNKIS) the composition is skewed to polar residues. Over residues 30-58 (KAHDNHTSSMITEHKNADKEKGKQEKESR) the composition is skewed to basic and acidic residues. Composition is skewed to low complexity over residues 63–76 (QSSS…PQVS) and 103–127 (NSSR…QLSK). Residue serine 105 is modified to Phosphoserine. Basic residues predominate over residues 129–143 (GLHHHHTSNNKHSHR). Residues 528–537 (SSRSLSLPSS) show a composition bias toward low complexity. Residues 543–553 (KRKKSPTKATK) show a composition bias toward basic residues. Low complexity-rich tracts occupy residues 570–601 (STSH…SSPP) and 665–676 (SPISSNSDNSFP).

This is an uncharacterized protein from Saccharomyces cerevisiae (strain ATCC 204508 / S288c) (Baker's yeast).